We begin with the raw amino-acid sequence, 269 residues long: Eukaryotic translation initiation factor 3 subunit G-1 (269 aa).

An RRM domain is found at 188–266; it reads AAIRISNLSE…LILSVEWSKP (79 aa). Position 198 is a phosphoserine (serine 198).

The protein belongs to the eIF-3 subunit G family. Component of the eukaryotic translation initiation factor 3 (eIF-3) complex. The eIF-3 complex interacts with pix.

It localises to the cytoplasm. In terms of biological role, RNA-binding component of the eukaryotic translation initiation factor 3 (eIF-3) complex, which is involved in protein synthesis of a specialized repertoire of mRNAs and, together with other initiation factors, stimulates binding of mRNA and methionyl-tRNAi to the 40S ribosome. The eIF-3 complex specifically targets and initiates translation of a subset of mRNAs involved in cell proliferation. This subunit can bind 18S rRNA. This is Eukaryotic translation initiation factor 3 subunit G-1 from Drosophila melanogaster (Fruit fly).